A 117-amino-acid chain; its full sequence is Large ribosomal subunit protein bL20 (117 aa).

This sequence belongs to the bacterial ribosomal protein bL20 family.

Binds directly to 23S ribosomal RNA and is necessary for the in vitro assembly process of the 50S ribosomal subunit. It is not involved in the protein synthesizing functions of that subunit. The polypeptide is Large ribosomal subunit protein bL20 (Actinobacillus pleuropneumoniae serotype 7 (strain AP76)).